A 382-amino-acid polypeptide reads, in one-letter code: Homoserine O-acetyltransferase (382 aa).

The AB hydrolase-1 domain maps to 52 to 356 (NVVMVLHALT…TYGHDGFLVE (305 aa)). The active-site Nucleophile is serine 157. Arginine 227 lines the substrate pocket. Active-site residues include aspartate 320 and histidine 350. Residue aspartate 351 participates in substrate binding.

It belongs to the AB hydrolase superfamily. MetX family. As to quaternary structure, homodimer.

It localises to the cytoplasm. The catalysed reaction is L-homoserine + acetyl-CoA = O-acetyl-L-homoserine + CoA. The protein operates within amino-acid biosynthesis; L-methionine biosynthesis via de novo pathway; O-acetyl-L-homoserine from L-homoserine: step 1/1. Its function is as follows. Transfers an acetyl group from acetyl-CoA to L-homoserine, forming acetyl-L-homoserine. This Mycobacterium leprae (strain TN) protein is Homoserine O-acetyltransferase.